A 61-amino-acid chain; its full sequence is uncharacterized protein (61 aa).

This is an uncharacterized protein from Escherichia coli (strain K12).